Here is a 433-residue protein sequence, read N- to C-terminus: DNA polymerase processivity factor (433 aa).

The segment at 274-433 (RGDPFDKNYV…VPNTKKQKCG (160 aa)) is disordered. Gly residues-rich tracts occupy residues 289–298 (SRGGGGGGGS), 325–336 (GLGGLGGGGGGG), and 344–359 (GGGGSGTRKMSSGGGG). Residues 360 to 376 (GDHDHGLSSKEKYEQHK) are compositionally biased toward basic and acidic residues. The span at 385–398 (GGSGGGGGGGGGGL) shows a compositional bias: gly residues. Residue K410 forms a Glycyl lysine isopeptide (Lys-Gly) (interchain with G-Cter in host SUMO1) linkage. 3 positions are modified to phosphoserine: S413, S415, and S418.

Belongs to the herpesviridae polymerase accessory protein family. Forms homodimers. Interacts with host SMARCB1. Interacts with host NCL/nucleolin; this interaction is important for the organization of proteins within viral replication compartments. Interacts with UL112/UL113; this interaction is necessary for efficient viral DNA replication. Interacts with UL84. Interacts with the uracil DNA glycosylase UL114. Interacts with the DNA polymerase catalytic subunit UL54. Interacts with host IRF3. Interacts with host RELA. In terms of processing, phosphorylated by UL97 on serine residues, phosphorylation seems important for UL44 nuclear entry but does not directly affect its role in replication. Post-translationally, sumoylated. Sumoylation on Lys-410 increases viral DNA replication.

It localises to the virion. The protein resides in the host nucleus. Functionally, accessory subunit of the DNA polymerase that plays an essential role in viral DNA replication and acts by increasing the processivity of polymerization. Forms dimers that binds to double-stranded DNA and UL54 specifically to stimulates long chain DNA synthesis efficiently. Plays an important role in maintaining the structure of viral replication compartments by interacting with host nucleolin/NUC. In addition, suppresses innate immune responses through effects on host IRF3 and NF-kappa-B. Mechanistically, interfere with the binding of IRF3 and the p65 NF-kappa-B subunit to the promoters of antiviral genes, thereby inhibiting the expression of these genes. This is DNA polymerase processivity factor (UL44) from Homo sapiens (Human).